Here is a 496-residue protein sequence, read N- to C-terminus: RNA-binding motif protein, Y chromosome, family 1 member F/J (496 aa).

The region spanning 8 to 85 (GKLFIGGLNR…KAIKVEQAKK (78 aa)) is the RRM domain. Disordered regions lie at residues 81-345 (EQAK…YAPP) and 452-496 (KDQR…SSRY). Low complexity-rich tracts occupy residues 97-114 (PASS…SARG) and 149-159 (PVKRGPSSRSG). Residues 175-184 (NSWMGSQGPM) are compositionally biased toward polar residues. Composition is skewed to basic and acidic residues over residues 204–214 (RNDRMSTRHDG), 242–253 (DNGHSNRDEHSS), 276–289 (AYRD…DESY), 313–326 (GYRD…HESY), 335–345 (SSRETRDYAPP), and 484–496 (GESR…SSRY).

Interacts with splicing factor proteins SFRS3/SRP20, TRA2B/SFRS10, KHDRBS1/SAM68 and KHDRBS3. As to expression, testis-specific.

The protein localises to the nucleus. In terms of biological role, RNA-binding protein which may be involved in spermatogenesis. Required for sperm development, possibly by participating in pre-mRNA splicing in the testis. The polypeptide is RNA-binding motif protein, Y chromosome, family 1 member F/J (RBMY1F) (Homo sapiens (Human)).